The chain runs to 416 residues: MLKRDMNIADYDAELFAAIQEETLRQEEHIELIASENYTSPRVMEAQGSQLTNKYAEGYPGKRYYGGCEYVDKAEQLAIDRACKLFGCEYANVQPHSGSQANSAVYMALLNPGDTVLGMSLAHGGHLTHGSPVNFSGKHYNVIPYGIDEAGQINYDEMEQLALEHKPKMIIGGFSAYSQIVDWKRMREIADKVDAYLFVDMAHVAGLIAAGEYPTPVPHAHVVTTTTHKTLAGPRGGLILSNAGEDMYKKLNSAVFPGGQGGPLMHVIAGKAVAFKEAMEPEFKAYQARVVKNAKAMVGQFQERGYKIVSNGTENHLFLVDLIDKDITGKDADAALGAANITVNKNSVPNDPRSPFVTSGIRVGTPAITRRGFTEEDAKDLANWMCDVLDNIGNEEVIEATKQKVLEICKRLPVYA.

Residues L121 and 125 to 127 (GHL) each bind (6S)-5,6,7,8-tetrahydrofolate. Position 229 is an N6-(pyridoxal phosphate)lysine (K229). Residues E245 and 354–356 (SPF) contribute to the (6S)-5,6,7,8-tetrahydrofolate site.

It belongs to the SHMT family. As to quaternary structure, homodimer. Requires pyridoxal 5'-phosphate as cofactor.

It is found in the cytoplasm. It catalyses the reaction (6R)-5,10-methylene-5,6,7,8-tetrahydrofolate + glycine + H2O = (6S)-5,6,7,8-tetrahydrofolate + L-serine. The protein operates within one-carbon metabolism; tetrahydrofolate interconversion. It functions in the pathway amino-acid biosynthesis; glycine biosynthesis; glycine from L-serine: step 1/1. In terms of biological role, catalyzes the reversible interconversion of serine and glycine with tetrahydrofolate (THF) serving as the one-carbon carrier. This reaction serves as the major source of one-carbon groups required for the biosynthesis of purines, thymidylate, methionine, and other important biomolecules. Also exhibits THF-independent aldolase activity toward beta-hydroxyamino acids, producing glycine and aldehydes, via a retro-aldol mechanism. The protein is Serine hydroxymethyltransferase 1 of Vibrio parahaemolyticus serotype O3:K6 (strain RIMD 2210633).